We begin with the raw amino-acid sequence, 218 residues long: uncharacterized protein (218 aa).

The segment at 154–199 (CFICTMEYSRTDKNLHPIILNCGHNLCRSCINKLTGNGIVKCPFDR) adopts an RING-type zinc-finger fold.

This is an uncharacterized protein from Caenorhabditis elegans.